The following is a 289-amino-acid chain: 3-methyl-2-oxobutanoate hydroxymethyltransferase (289 aa).

Aspartate 50 and aspartate 89 together coordinate Mg(2+). 3-methyl-2-oxobutanoate-binding positions include aspartate 50–serine 51, aspartate 89, and lysine 119. Glutamate 121 lines the Mg(2+) pocket. Glutamate 188 (proton acceptor) is an active-site residue. The disordered stretch occupies residues alanine 266–aspartate 289.

The protein belongs to the PanB family. Homodecamer; pentamer of dimers. The cofactor is Mg(2+).

The protein localises to the cytoplasm. The enzyme catalyses 3-methyl-2-oxobutanoate + (6R)-5,10-methylene-5,6,7,8-tetrahydrofolate + H2O = 2-dehydropantoate + (6S)-5,6,7,8-tetrahydrofolate. It participates in cofactor biosynthesis; (R)-pantothenate biosynthesis; (R)-pantoate from 3-methyl-2-oxobutanoate: step 1/2. Catalyzes the reversible reaction in which hydroxymethyl group from 5,10-methylenetetrahydrofolate is transferred onto alpha-ketoisovalerate to form ketopantoate. This is 3-methyl-2-oxobutanoate hydroxymethyltransferase from Oleidesulfovibrio alaskensis (strain ATCC BAA-1058 / DSM 17464 / G20) (Desulfovibrio alaskensis).